The chain runs to 233 residues: Homeobox protein not2 (233 aa).

A DNA-binding region (homeobox) is located at residues 135–194 (LKRIRTVFTPEQLERLEKEFLKQQYMVGTERVDLASTLNLTETQVKVWFQNRRIKWRKQS). The interval 212–233 (SSDHTDDSRETEEEEDDVDVEL) is disordered. Acidic residues predominate over residues 220–233 (RETEEEEDDVDVEL).

In terms of tissue distribution, localized to the dorsal lip of the blastopore (Spemann organizer) during early gastrulation, after which expression continues in tissues derived from the organizer. Expressed in the notochord during mid-gastrulation, the chordoneural hinge, notochord and ventral spinal cord of the tailbud at stage 22, and finally the tip of the tail in the tadpole (stage 35).

Its subcellular location is the nucleus. In terms of biological role, transcriptional repressor. Plays a fundamental role in notochord formation, acting within the mesodermal region. Acts downstream of gsc and upstream of chrd and foxa4-A/pintallavis. This chain is Homeobox protein not2, found in Xenopus laevis (African clawed frog).